The following is a 505-amino-acid chain: Protein phosphatase 1J (505 aa).

The disordered stretch occupies residues 1–103 (MLNRVRSAVA…PPDTGRRLPW (103 aa)). Positions 27–50 (DLPNAASAPPAAAPEAPRSPPAKA) are enriched in low complexity. Phosphoserine occurs at positions 66 and 76. In terms of domain architecture, PPM-type phosphatase spans 104–498 (STGYAEVINA…DDISVFVIPL (395 aa)).

It belongs to the PP2C family. Interacts with UBE2I/UBC9.

It catalyses the reaction O-phospho-L-seryl-[protein] + H2O = L-seryl-[protein] + phosphate. The catalysed reaction is O-phospho-L-threonyl-[protein] + H2O = L-threonyl-[protein] + phosphate. The chain is Protein phosphatase 1J (PPM1J) from Homo sapiens (Human).